A 203-amino-acid chain; its full sequence is ATP-dependent Clp protease proteolytic subunit (203 aa).

The Nucleophile role is filled by serine 103. The active site involves histidine 128.

The protein belongs to the peptidase S14 family. As to quaternary structure, fourteen ClpP subunits assemble into 2 heptameric rings which stack back to back to give a disk-like structure with a central cavity, resembling the structure of eukaryotic proteasomes.

Its subcellular location is the cytoplasm. It carries out the reaction Hydrolysis of proteins to small peptides in the presence of ATP and magnesium. alpha-casein is the usual test substrate. In the absence of ATP, only oligopeptides shorter than five residues are hydrolyzed (such as succinyl-Leu-Tyr-|-NHMec, and Leu-Tyr-Leu-|-Tyr-Trp, in which cleavage of the -Tyr-|-Leu- and -Tyr-|-Trp bonds also occurs).. Its function is as follows. Cleaves peptides in various proteins in a process that requires ATP hydrolysis. Has a chymotrypsin-like activity. Plays a major role in the degradation of misfolded proteins. In Dichelobacter nodosus (strain VCS1703A), this protein is ATP-dependent Clp protease proteolytic subunit.